The following is a 647-amino-acid chain: Sodium/nucleoside cotransporter 1 (647 aa).

Residues 1 to 79 (MEDNTPRQRD…VRRFCREHTQ (79 aa)) are Cytoplasmic-facing. The segment at 34 to 58 (EGRAPGSDSSPAEVGGGWSKAGPEH) is disordered. A helical transmembrane segment spans residues 80–103 (LFRWICTGLLCTAFAAFLLIACLL). Over 104–108 (DFQRA) the chain is Extracellular. The chain crosses the membrane as a helical span at residues 109–127 (LALFVLFCVVLFFLAHSLL). The Cytoplasmic segment spans residues 128–146 (KRLLGPKLLRCVKPLRHPC). A helical membrane pass occupies residues 147–166 (LNLWFKRGLALAAFLGLVLW). At 167 to 177 (LVLDTAQRPEQ) the chain is on the extracellular side. A helical membrane pass occupies residues 178–194 (LVSFGGICVFILLLFAG). The Cytoplasmic portion of the chain corresponds to 195–200 (SKHHRA). The chain crosses the membrane as a helical span at residues 201–221 (VSWRAVSWGLGLQFALGLFVI). Residues 222-260 (RTEPGFIAFQWLGDQIQIFLSYTEAGSSFVFGEALVKDV) are Extracellular-facing. Residues 261–282 (FAFQVLPIIVFFSCAMSVLYYV) traverse the membrane as a helical segment. The Cytoplasmic portion of the chain corresponds to 283–293 (GLMQWVILKIS). A helical membrane pass occupies residues 294–317 (WLMQATMGTTATETLSVAGNIFVS). Over 318–336 (QTEAPLLIRPYLADMTLSE) the chain is Extracellular. A helical transmembrane segment spans residues 337–359 (IHVVMTGGYATIAGSLLGAYISF). Residues 360-365 (GIDAAS) lie on the Cytoplasmic side of the membrane. Residues 366 to 385 (LIAASVMAAPCALALSKLVY) form a helical membrane-spanning segment. Residues 386–422 (PEVEESKFKREEGVKLTYGDAQNLLEAASSGAAMSVR) lie on the Extracellular side of the membrane. A helical membrane pass occupies residues 423 to 445 (VVTNIAANLIAFLAVLAFINAAL). The Cytoplasmic segment spans residues 446-456 (SWLGDMVDVQG). The helical transmembrane segment at 457–478 (LSFQLICSYVLRPVAFLMGVAW) threads the bilayer. Residues 479 to 533 (EDCPVVAELLGMKLFLNEFVAYQELSGYKQRRLAGAEEWVGSRKQWISVRAEILT) are Extracellular-facing. A helical membrane pass occupies residues 534 to 557 (TYALCGFANFSSIGIMLGGLTSMV). Residues 558 to 568 (PQRKGDFSQIV) lie on the Cytoplasmic side of the membrane. The helical transmembrane segment at 569 to 591 (LRALCTGACVSLVNACVAGILYV) threads the bilayer. The Extracellular segment spans residues 592-647 (PRGAEVDCVSFLNTTLSSSSFEVYQCCRQFFQSTSLEFSPEALDNCCRFYNHTICV). N-linked (GlcNAc...) asparagine glycans are attached at residues Asn-604 and Asn-642.

Belongs to the concentrative nucleoside transporter (CNT) (TC 2.A.41) family. N-glycosylated. N-glycosylation is required for localization to the plasma membrane and the transporter activity.

It localises to the cell membrane. The protein resides in the apical cell membrane. It catalyses the reaction uridine(out) + Na(+)(out) = uridine(in) + Na(+)(in). The catalysed reaction is thymidine(out) + Na(+)(out) = thymidine(in) + Na(+)(in). It carries out the reaction cytidine(out) + Na(+)(out) = cytidine(in) + Na(+)(in). The enzyme catalyses adenosine(out) + Na(+)(out) = adenosine(in) + Na(+)(in). Due to its high apparent affinity but slow transport, adenosine could act as a negative regulator of pyrimidine transport under some conditions. In terms of biological role, sodium and pyrimidine nucleoside symporter of the plasma membrane that imports uridine, thymidine and cytidine into cells by coupling their transport to the transmembrane sodium electrochemical gradient. Also transports adenosine, an atypical substrate transported with high apparent affinity, but low maximum velocity. Therefore, exhibits the transport characteristics of the nucleoside transport system cit or N2 subtype (N2/cit). Involved in renal nucleoside (re)absorption. This Sus scrofa (Pig) protein is Sodium/nucleoside cotransporter 1 (SLC28A1).